Consider the following 175-residue polypeptide: NADH-ubiquinone oxidoreductase chain 6 (175 aa).

6 helical membrane-spanning segments follow: residues 1-21 (MMYI…GFSS), 24-44 (SPVY…GIIM), 51-71 (LGLV…GYTI), 87-107 (VVLS…VWLF), 112-132 (ELVG…EGGF), and 148-168 (CGFW…FIAT).

It belongs to the complex I subunit 6 family. Core subunit of respiratory chain NADH dehydrogenase (Complex I) which is composed of 45 different subunits.

The protein resides in the mitochondrion inner membrane. The catalysed reaction is a ubiquinone + NADH + 5 H(+)(in) = a ubiquinol + NAD(+) + 4 H(+)(out). In terms of biological role, core subunit of the mitochondrial membrane respiratory chain NADH dehydrogenase (Complex I) which catalyzes electron transfer from NADH through the respiratory chain, using ubiquinone as an electron acceptor. Essential for the catalytic activity and assembly of complex I. The protein is NADH-ubiquinone oxidoreductase chain 6 (MT-ND6) of Elephas maximus (Indian elephant).